The sequence spans 622 residues: E3 ubiquitin-protein ligase hrd-1 (622 aa).

A signal peptide spans 1–23 (MRVSAGLMIGGSCVATAATVLNA). At 24–41 (FVINKQFYPSIVYLSKSN) the chain is on the lumenal side. The chain crosses the membrane as a helical span at residues 42-62 (ASMAVLYFQGIVLVYLMFQLL). Residues 63 to 99 (KSILFGDLRAAEAEHLSERTWHAVLETCLAFTVFRDD) are Cytoplasmic-facing. A helical membrane pass occupies residues 100–120 (FSAMFVMQFIGLLFIKCFHWL). The Lumenal segment spans residues 121–141 (ADDRVDMMERSPVITLRFHLR). Residues 142 to 162 (MMTVLAALGFADSYFVSSAYF) traverse the membrane as a helical segment. Residues 163-170 (STITKGAS) lie on the Cytoplasmic side of the membrane. A helical membrane pass occupies residues 171–191 (SQIVFGFEYAILLALVLHVTI). Topologically, residues 192-215 (KYLLHMHDLRNPQSWDNKAVYLLY) are lumenal. The helical transmembrane segment at 216–236 (AELLINLIRCVLYGFFAVIML) threads the bilayer. At 237–622 (RVHTFPLFSV…RFPPPNPEHE (386 aa)) the chain is on the cytoplasmic side. The RING-type; atypical zinc-finger motif lies at 292 to 333 (CIICREEMTVESSPKRLPCSHVFHAHCLRSWFQRQQTCPTCR). The span at 436–445 (MPPPPIPQPN) shows a compositional bias: pro residues. Disordered stretches follow at residues 436-463 (MPPP…PNFD) and 514-622 (PVPT…PEHE). Low complexity predominate over residues 526-538 (ATASSVPTSVPSE). A compositionally biased stretch (polar residues) spans 562–577 (FNDTQSTSTPSTSAGP). The segment covering 579–596 (PSLTPSTSSVPSTSSVRT) has biased composition (low complexity).

This sequence belongs to the HRD1 family. In terms of assembly, homodimer.

It is found in the endoplasmic reticulum membrane. It carries out the reaction S-ubiquitinyl-[E2 ubiquitin-conjugating enzyme]-L-cysteine + [acceptor protein]-L-lysine = [E2 ubiquitin-conjugating enzyme]-L-cysteine + N(6)-ubiquitinyl-[acceptor protein]-L-lysine.. Its pathway is protein modification; protein ubiquitination. In terms of biological role, acts as an E3 ubiquitin-protein ligase which accepts ubiquitin specifically from endoplasmic reticulum-associated ubc-7 E2 ligase and transfers it to substrates, promoting their degradation. Component of the endoplasmic reticulum quality control (ERQC) system, which is also called the ER-associated degradation (ERAD) system, involved in ubiquitin-dependent degradation of misfolded endoplasmic reticulum proteins. Also promotes the degradation of normal but naturally short-lived proteins. Protects cells from ER stress-induced apoptosis. Thought to play a role together with hsp-3 in developmental growth and function of intestinal cells and to play a role together with hsp-4 in gonad formation. The chain is E3 ubiquitin-protein ligase hrd-1 from Caenorhabditis briggsae.